A 253-amino-acid chain; its full sequence is 3-deoxy-manno-octulosonate cytidylyltransferase (253 aa).

This sequence belongs to the KdsB family.

It localises to the cytoplasm. It catalyses the reaction 3-deoxy-alpha-D-manno-oct-2-ulosonate + CTP = CMP-3-deoxy-beta-D-manno-octulosonate + diphosphate. Its pathway is nucleotide-sugar biosynthesis; CMP-3-deoxy-D-manno-octulosonate biosynthesis; CMP-3-deoxy-D-manno-octulosonate from 3-deoxy-D-manno-octulosonate and CTP: step 1/1. It participates in bacterial outer membrane biogenesis; lipopolysaccharide biosynthesis. Its function is as follows. Activates KDO (a required 8-carbon sugar) for incorporation into bacterial lipopolysaccharide in Gram-negative bacteria. The sequence is that of 3-deoxy-manno-octulosonate cytidylyltransferase from Pseudoalteromonas translucida (strain TAC 125).